The primary structure comprises 385 residues: WD repeat-containing protein 74 (385 aa).

6 WD repeats span residues 40–80, 83–122, 128–168, 179–220, 224–266, and 267–306; these read RREE…FQGQ, CPGG…TSSD, RVGP…EPVF, DLRV…RRPV, TYGE…GCLK, and GLAG…GLEH. Ser214 is subject to Phosphoserine. Position 311 is an N6-methyllysine (Lys311). The required for nucleolar and nuclear location stretch occupies residues 320-385; it reads SGRDNWEDEP…KKKRPGSTSP (66 aa). Disordered stretches follow at residues 323–345 and 360–385; these read DNWE…DTET and LSGL…STSP. Ser361 carries the phosphoserine modification. A compositionally biased stretch (basic residues) spans 372–385; sequence TRRRKKKRPGSTSP.

As to quaternary structure, isoform 1 interacts (through WDR repeats) with NVL; the interaction is independent of RNA or pre-60S ribosome particles. Isoform 2 does not interact with NVL. Interacts with MTREX; the interaction dissociation in a late stage of rRNA synthesis is required for appropriate maturation of pre-60S particles and depends on the ATPase activity of NVL.

The protein resides in the nucleus. Its subcellular location is the nucleolus. Its function is as follows. Regulatory protein of the MTREX-exosome complex involved in the synthesis of the 60S ribosomal subunit. Participates in an early cleavage of the pre-rRNA processing pathway in cooperation with NVL. Required for blastocyst formation, is necessary for RNA transcription, processing and/or stability during preimplantation development. This is WD repeat-containing protein 74 (WDR74) from Homo sapiens (Human).